The sequence spans 247 residues: Large ribosomal subunit protein uL24m (247 aa).

A KOW domain is found at 84–117; that stretch reads FFRGDRIEVLVGKDKGKQGIVTQVIPERNWVIVE.

Belongs to the universal ribosomal protein uL24 family. As to quaternary structure, component of the mitochondrial ribosome large subunit (39S) which comprises a 16S rRNA and about 50 distinct proteins.

The protein resides in the mitochondrion. The sequence is that of Large ribosomal subunit protein uL24m (mRpL24) from Drosophila melanogaster (Fruit fly).